A 301-amino-acid polypeptide reads, in one-letter code: Protein FdhE homolog (301 aa).

This sequence belongs to the FdhE family.

Its subcellular location is the cytoplasm. Its function is as follows. Necessary for formate dehydrogenase activity. This chain is Protein FdhE homolog, found in Shewanella baltica (strain OS223).